A 425-amino-acid chain; its full sequence is UDP-N-acetylglucosamine 1-carboxyvinyltransferase (425 aa).

Phosphoenolpyruvate is bound at residue 22-23 (KN). A UDP-N-acetyl-alpha-D-glucosamine-binding site is contributed by Arg98. Cys122 acts as the Proton donor in catalysis. Position 122 is a 2-(S-cysteinyl)pyruvic acid O-phosphothioketal (Cys122). Residues 127 to 131 (RPVDQ), Asp313, and Ile335 contribute to the UDP-N-acetyl-alpha-D-glucosamine site.

The protein belongs to the EPSP synthase family. MurA subfamily.

It is found in the cytoplasm. It catalyses the reaction phosphoenolpyruvate + UDP-N-acetyl-alpha-D-glucosamine = UDP-N-acetyl-3-O-(1-carboxyvinyl)-alpha-D-glucosamine + phosphate. It participates in cell wall biogenesis; peptidoglycan biosynthesis. Its function is as follows. Cell wall formation. Adds enolpyruvyl to UDP-N-acetylglucosamine. This Xylella fastidiosa (strain 9a5c) protein is UDP-N-acetylglucosamine 1-carboxyvinyltransferase.